The following is a 481-amino-acid chain: MIQGTTSDAGKSTLVAGLCRIAHRAGVRVAPFKPQNMALNSAVTADGGEIGRAQALQAQAAGLAPTVDMNPVLLKPNSDTGAQVIIHGRPRGDLNARAYHDYKPTAMAAVLASHGRLRAQYDLVLVEGAGSPAEVNLRARDIANMGFAEAVDCPVVLVADIDRGGVFAHLVGTLACLSESERARVTGFVINRFRGDLSLLTPGLDWLTAQTGKPVFGVLPYLQGLHLDAEDAVQTAQSAASGEVLRVVIPVLPRISNHTDFDALRAHPQVDVRMVGPGRPIPPADLVILPGSKSVQADLAWLRAHGWDAAIARHLRYGGKLIGICGGMQMLGRRLRDPLGLEGRPGSLDGLGYLDFETTLAPAKQLRQVRGTLADGGAALAGYEIHMGVTEGPALARPAVRLDDGRTDGAVSADGQILATYLHGLFDAPEACRALLAWAGVREARAQDYAALREASLERLADTLRAHLDLPALFASLAVRG.

The region spanning 244–431 (VLRVVIPVLP…LHGLFDAPEA (188 aa)) is the GATase cobBQ-type domain. Cysteine 325 serves as the catalytic Nucleophile. The active site involves histidine 423.

The protein belongs to the CobB/CobQ family. CobQ subfamily.

It participates in cofactor biosynthesis; adenosylcobalamin biosynthesis. In terms of biological role, catalyzes amidations at positions B, D, E, and G on adenosylcobyrinic A,C-diamide. NH(2) groups are provided by glutamine, and one molecule of ATP is hydrogenolyzed for each amidation. This chain is Cobyric acid synthase, found in Ralstonia nicotianae (strain ATCC BAA-1114 / GMI1000) (Ralstonia solanacearum).